The primary structure comprises 363 residues: NADH-quinone oxidoreductase subunit H (363 aa).

10 consecutive transmembrane segments (helical) span residues 29-49, 62-82, 96-116, 127-147, 163-183, 202-222, 239-257, 264-286, 299-319, and 339-359; these read VLKILLIAVPVIVTVAFYVVW, GPMYVGMGIFQAFADVFKLLF, FIIAPLLTLAPAFAAWSVVPF, VGLLYLLAMTSLGVYGIILAG, AAQVVSYEIAMGFALVGVMIA, FFDWFLIPLFPLFIVYWVSGV, IVAGHMVEYSGGAFALFFL, ILVSFLISIFFLGGWLSPIQGWV, TGGWPWLLMKVFFFASAYIWF, and FIPLTIVWIAVTALMVFYGVI.

The protein belongs to the complex I subunit 1 family. In terms of assembly, NDH-1 is composed of 14 different subunits. Subunits NuoA, H, J, K, L, M, N constitute the membrane sector of the complex.

It is found in the cell inner membrane. The enzyme catalyses a quinone + NADH + 5 H(+)(in) = a quinol + NAD(+) + 4 H(+)(out). Its function is as follows. NDH-1 shuttles electrons from NADH, via FMN and iron-sulfur (Fe-S) centers, to quinones in the respiratory chain. The immediate electron acceptor for the enzyme in this species is believed to be ubiquinone. Couples the redox reaction to proton translocation (for every two electrons transferred, four hydrogen ions are translocated across the cytoplasmic membrane), and thus conserves the redox energy in a proton gradient. This subunit may bind ubiquinone. This Xanthomonas campestris pv. campestris (strain 8004) protein is NADH-quinone oxidoreductase subunit H.